Here is a 135-residue protein sequence, read N- to C-terminus: Large ribosomal subunit protein uL16c (135 aa).

The protein belongs to the universal ribosomal protein uL16 family. As to quaternary structure, part of the 50S ribosomal subunit.

The protein resides in the plastid. The protein localises to the chloroplast. The sequence is that of Large ribosomal subunit protein uL16c from Ranunculus macranthus (Large buttercup).